A 493-amino-acid chain; its full sequence is ATP synthase subunit beta 3 (493 aa).

The disordered stretch occupies residues 113-138; it reads VPGDNGTPLPPGTPRRPIHRKPPPLA. ATP is bound at residue 170-177; the sequence is GGAGVGKT.

This sequence belongs to the ATPase alpha/beta chains family. In terms of assembly, F-type ATPases have 2 components, CF(1) - the catalytic core - and CF(0) - the membrane proton channel. CF(1) has five subunits: alpha(3), beta(3), gamma(1), delta(1), epsilon(1). CF(0) has three main subunits: a(1), b(2) and c(9-12). The alpha and beta chains form an alternating ring which encloses part of the gamma chain. CF(1) is attached to CF(0) by a central stalk formed by the gamma and epsilon chains, while a peripheral stalk is formed by the delta and b chains.

It localises to the cell inner membrane. It catalyses the reaction ATP + H2O + 4 H(+)(in) = ADP + phosphate + 5 H(+)(out). Produces ATP from ADP in the presence of a proton gradient across the membrane. The catalytic sites are hosted primarily by the beta subunits. The polypeptide is ATP synthase subunit beta 3 (Paraburkholderia xenovorans (strain LB400)).